The chain runs to 108 residues: MKNTTTPTLQGYDIREYLGIVTGEAILGANIFKDLFAGIRDFVGGRSNAYEKELIKARKIAFNEMNSTAESLGANAVVGINIDYEVVGTSNSMLMVSIYGTAVKIFSL.

It belongs to the UPF0145 family.

The protein is UPF0145 protein HDEF_1024 of Hamiltonella defensa subsp. Acyrthosiphon pisum (strain 5AT).